The sequence spans 388 residues: Mannitol-1-phosphate 5-dehydrogenase (388 aa).

Position 5-16 (5-16 (AIQFGGGNIGRG)) interacts with NAD(+). The active site involves Lys-213.

Belongs to the mannitol dehydrogenase family. Monomer.

It carries out the reaction D-mannitol 1-phosphate + NAD(+) = beta-D-fructose 6-phosphate + NADH + H(+). Functionally, catalyzes the NAD(H)-dependent interconversion of D-fructose 6-phosphate and D-mannitol 1-phosphate in the mannitol metabolic pathway. In Aspergillus fumigatus (strain CBS 144.89 / FGSC A1163 / CEA10) (Neosartorya fumigata), this protein is Mannitol-1-phosphate 5-dehydrogenase (mpdA).